Reading from the N-terminus, the 320-residue chain is Heterogeneous nuclear ribonucleoprotein A1-like 3 (320 aa).

2 consecutive RRM domains span residues 14–97 (RKLF…DSQR) and 105–184 (KKIF…LSKQ). Disordered stretches follow at residues 182–218 (SKQE…NFGR) and 271–320 (SNFG…GRRF). Positions 197–218 (SGSGNFGGGRGGGFGGNDNFGR) are enriched in gly residues. Residues 308-320 (SSSSSSYGSGRRF) show a composition bias toward low complexity.

In Homo sapiens (Human), this protein is Heterogeneous nuclear ribonucleoprotein A1-like 3.